A 485-amino-acid chain; its full sequence is Glutamate--tRNA ligase 1 (485 aa).

The 'HIGH' region signature appears at 10–20 (PSPTGAIHIGN). Residues 252–256 (KLSKR) carry the 'KMSKS' region motif. Lys-255 contributes to the ATP binding site.

The protein belongs to the class-I aminoacyl-tRNA synthetase family. Glutamate--tRNA ligase type 1 subfamily. Monomer.

The protein resides in the cytoplasm. The catalysed reaction is tRNA(Glu) + L-glutamate + ATP = L-glutamyl-tRNA(Glu) + AMP + diphosphate. Its function is as follows. Catalyzes the attachment of glutamate to tRNA(Glu) in a two-step reaction: glutamate is first activated by ATP to form Glu-AMP and then transferred to the acceptor end of tRNA(Glu). The chain is Glutamate--tRNA ligase 1 from Thermoanaerobacter sp. (strain X514).